Here is a 325-residue protein sequence, read N- to C-terminus: MQRHLISAADLTRDDAVHLLDTAEEMARVADRPIKKLPTLRGRTVVNLFFEDSTRTRISFEAAEKRLSADVINFTAKGSSVSKGESLKDTAQTLEAMGVDAVVIRHGASGAPYRLATSGWIDAVVINAGDGTHQHPTQALLDAFTMRRRLVGRDAGLGRDLAGKRITLVGDILHSRVARSNVDLLHTLGAEVTLVAPPTLLPVGIESWPCEVAYDLDSTLPKSDAVMMLRVQRERMNAAFFPTEREYSRRYGLNGDRMAKMPEHAIVMHPGPMVRGMEITAEVADSDRCTAIEQVTNGVSIRMAVLYLLLGGNEPAVSHTRIEEK.

Residues Arg55 and Thr56 each coordinate carbamoyl phosphate. Lys83 lines the L-aspartate pocket. The carbamoyl phosphate site is built by Arg105, His135, and Gln138. 2 residues coordinate L-aspartate: Arg176 and Arg230. Carbamoyl phosphate-binding residues include Gly271 and Pro272.

The protein belongs to the aspartate/ornithine carbamoyltransferase superfamily. ATCase family. As to quaternary structure, heterododecamer (2C3:3R2) of six catalytic PyrB chains organized as two trimers (C3), and six regulatory PyrI chains organized as three dimers (R2).

The catalysed reaction is carbamoyl phosphate + L-aspartate = N-carbamoyl-L-aspartate + phosphate + H(+). The protein operates within pyrimidine metabolism; UMP biosynthesis via de novo pathway; (S)-dihydroorotate from bicarbonate: step 2/3. Functionally, catalyzes the condensation of carbamoyl phosphate and aspartate to form carbamoyl aspartate and inorganic phosphate, the committed step in the de novo pyrimidine nucleotide biosynthesis pathway. The chain is Aspartate carbamoyltransferase catalytic subunit from Streptomyces avermitilis (strain ATCC 31267 / DSM 46492 / JCM 5070 / NBRC 14893 / NCIMB 12804 / NRRL 8165 / MA-4680).